A 274-amino-acid polypeptide reads, in one-letter code: Cytochrome b-c1 complex subunit Rieske, mitochondrial (274 aa).

At Ser79 to Ser103 the chain is on the mitochondrial matrix side. The chain crosses the membrane as a helical span at residues Lys104–Met140. Residues Ser141–Gly274 lie on the Mitochondrial intermembrane side of the membrane. Residues Glu187 to Val272 form the Rieske domain. Residues Cys217, His219, Cys236, His239, and Ser241 each contribute to the [2Fe-2S] cluster site. Cys222 and Cys238 are oxidised to a cystine.

This sequence belongs to the Rieske iron-sulfur protein family. As to quaternary structure, component of the ubiquinol-cytochrome c oxidoreductase (cytochrome b-c1 complex, complex III, CIII), a multisubunit enzyme composed of 11 subunits. The complex is composed of 3 respiratory subunits cytochrome b, cytochrome c1 and Rieske protein UQCRFS1, 2 core protein subunits UQCRC1/QCR1 and UQCRC2/QCR2, and 6 low-molecular weight protein subunits UQCRH/QCR6, UQCRB/QCR7, UQCRQ/QCR8, UQCR10/QCR9, UQCR11/QCR10 and subunit 9, the cleavage product of Rieske protein UQCRFS1. The complex exists as an obligatory dimer and forms supercomplexes (SCs) in the inner mitochondrial membrane with NADH-ubiquinone oxidoreductase (complex I, CI) and cytochrome c oxidase (complex IV, CIV), resulting in different assemblies (supercomplex SCI(1)III(2)IV(1) and megacomplex MCI(2)III(2)IV(2)). Incorporation of the Rieske protein UQCRFS1 is the penultimate step in complex III assembly. Interacts with TTC19, which is involved in the clearance of UQCRFS1 fragments. In terms of assembly, component of the ubiquinol-cytochrome c oxidoreductase (cytochrome b-c1 complex, complex III, CIII). Subunit 9 corresponds to the mitochondrial targeting sequence (MTS) of Rieske protein UQCRFS1. It is retained after processing and incorporated inside complex III, where it remains bound to the complex and localizes between the 2 core subunits UQCRC1/QCR1 and UQCRC2/QCR2. [2Fe-2S] cluster is required as a cofactor. In terms of processing, proteolytic processing is necessary for the correct insertion of UQCRFS1 in the complex III dimer. Several fragments are generated during UQCRFS1 insertion, most probably due to the endogenous matrix-processing peptidase (MPP) activity of the 2 core protein subunits UQCRC1/QCR1 and UQCRC2/QCR2, which are homologous to the 2 mitochondrial-processing peptidase (MPP) subunits beta-MPP and alpha-MPP respectively. The action of the protease is also necessary for the clearance of the UQCRFS1 fragments.

It is found in the mitochondrion inner membrane. The enzyme catalyses a quinol + 2 Fe(III)-[cytochrome c](out) = a quinone + 2 Fe(II)-[cytochrome c](out) + 2 H(+)(out). In terms of biological role, component of the ubiquinol-cytochrome c oxidoreductase, a multisubunit transmembrane complex that is part of the mitochondrial electron transport chain which drives oxidative phosphorylation. The respiratory chain contains 3 multisubunit complexes succinate dehydrogenase (complex II, CII), ubiquinol-cytochrome c oxidoreductase (cytochrome b-c1 complex, complex III, CIII) and cytochrome c oxidase (complex IV, CIV), that cooperate to transfer electrons derived from NADH and succinate to molecular oxygen, creating an electrochemical gradient over the inner membrane that drives transmembrane transport and the ATP synthase. The cytochrome b-c1 complex catalyzes electron transfer from ubiquinol to cytochrome c, linking this redox reaction to translocation of protons across the mitochondrial inner membrane, with protons being carried across the membrane as hydrogens on the quinol. In the process called Q cycle, 2 protons are consumed from the matrix, 4 protons are released into the intermembrane space and 2 electrons are passed to cytochrome c. The Rieske protein is a catalytic core subunit containing a [2Fe-2S] iron-sulfur cluster. It cycles between 2 conformational states during catalysis to transfer electrons from the quinol bound in the Q(0) site in cytochrome b to cytochrome c1. Incorporation of UQCRFS1 is the penultimate step in complex III assembly. Functionally, component of the ubiquinol-cytochrome c oxidoreductase (cytochrome b-c1 complex, complex III, CIII). UQCRFS1 undergoes proteolytic processing once it is incorporated in the complex III dimer. One of the fragments, called subunit 9, corresponds to its mitochondrial targeting sequence (MTS). The proteolytic processing is necessary for the correct insertion of UQCRFS1 in the complex III dimer, but the persistence of UQCRFS1-derived fragments may prevent newly imported UQCRFS1 to be processed and assembled into complex III and is detrimental for the complex III structure and function. This chain is Cytochrome b-c1 complex subunit Rieske, mitochondrial (Uqcrfs1), found in Rattus norvegicus (Rat).